Here is a 216-residue protein sequence, read N- to C-terminus: Peroxiredoxin (216 aa).

A Thioredoxin domain is found at 2-158 (VVIGEKFPEV…ILRLVKALKI (157 aa)). Cys-46 functions as the Cysteine sulfenic acid (-SOH) intermediate in the catalytic mechanism. Arg-121 lines the substrate pocket. Cys-205 and Cys-211 are disulfide-bonded.

This sequence belongs to the peroxiredoxin family. Prx6 subfamily. As to quaternary structure, homodecamer. Pentamer of dimers that assemble into a ring structure.

The protein resides in the cytoplasm. It carries out the reaction a hydroperoxide + [thioredoxin]-dithiol = an alcohol + [thioredoxin]-disulfide + H2O. In terms of biological role, thiol-specific peroxidase that catalyzes the reduction of hydrogen peroxide and organic hydroperoxides to water and alcohols, respectively. Plays a role in cell protection against oxidative stress by detoxifying peroxides. The chain is Peroxiredoxin from Pyrococcus abyssi (strain GE5 / Orsay).